A 1128-amino-acid polypeptide reads, in one-letter code: Nck-associated protein 1 (1128 aa).

The disordered stretch occupies residues 640–665 (AVNKKSKKQTGKKGEPEREKPGVESM). A compositionally biased stretch (basic and acidic residues) spans 651–665 (KKGEPEREKPGVESM). A helical transmembrane segment spans residues 995–1015 (IACLLMVFVAVSLPTLASNVM).

This sequence belongs to the HEM-1/HEM-2 family.

The protein resides in the cell membrane. It is found in the cell projection. The protein localises to the lamellipodium membrane. Functionally, part of the WAVE complex that regulates lamellipodia formation. The WAVE complex regulates actin filament reorganization via its interaction with the Arp2/3 complex. Actin remodeling activity is regulated by RAC1. Plays a role in neural tube closure. The sequence is that of Nck-associated protein 1 (nckap1) from Xenopus laevis (African clawed frog).